We begin with the raw amino-acid sequence, 344 residues long: N-acetyl-gamma-glutamyl-phosphate reductase (344 aa).

C149 is a catalytic residue.

This sequence belongs to the NAGSA dehydrogenase family. Type 1 subfamily.

The protein localises to the cytoplasm. It catalyses the reaction N-acetyl-L-glutamate 5-semialdehyde + phosphate + NADP(+) = N-acetyl-L-glutamyl 5-phosphate + NADPH + H(+). The protein operates within amino-acid biosynthesis; L-arginine biosynthesis; N(2)-acetyl-L-ornithine from L-glutamate: step 3/4. Its function is as follows. Catalyzes the NADPH-dependent reduction of N-acetyl-5-glutamyl phosphate to yield N-acetyl-L-glutamate 5-semialdehyde. This is N-acetyl-gamma-glutamyl-phosphate reductase from Halorhodospira halophila (strain DSM 244 / SL1) (Ectothiorhodospira halophila (strain DSM 244 / SL1)).